Here is an 85-residue protein sequence, read N- to C-terminus: Phosphocarrier protein HPr (85 aa).

The HPr domain occupies 1–85 (MFQRDIKITT…DLAKFLTTLK (85 aa)). The active-site Pros-phosphohistidine intermediate is histidine 15.

Belongs to the HPr family.

It is found in the cytoplasm. Its function is as follows. General (non sugar-specific) component of the phosphoenolpyruvate-dependent sugar phosphotransferase system (sugar PTS). This major carbohydrate active-transport system catalyzes the phosphorylation of incoming sugar substrates concomitantly with their translocation across the cell membrane. The phosphoryl group from phosphoenolpyruvate (PEP) is transferred to the phosphoryl carrier protein HPr by enzyme I. Phospho-HPr then transfers it to the PTS EIIA domain. This is Phosphocarrier protein HPr (ptsH) from Buchnera aphidicola subsp. Baizongia pistaciae (strain Bp).